A 284-amino-acid chain; its full sequence is MSAQLINGKEVSQKHLQAIAEAVAQRQQDNLHTPCLAVVLVGGDPAGAVYVRNKKTACQKCGIKSLSYELPESTSQEELLALVDRLNADSEVDGILVQLPLPKHLDSQAILERISPDKDVDGFHPYNVGRLAVKMPLMRPCTPKGVMTLLEAYGIDPKGKKAVVVGASNIVGRPQALELLLARATVTVCHSATENLADEVAAADILVVGVGIPNFVKGGWIKPGAVVIDVGINRLDDGSLCGDVEFETAKERAAMITPVPGGVGPMTIATLMENTLHAASLHDA.

Residues 166 to 168 (GAS), Ser191, and Ile232 each bind NADP(+).

The protein belongs to the tetrahydrofolate dehydrogenase/cyclohydrolase family. In terms of assembly, homodimer.

It catalyses the reaction (6R)-5,10-methylene-5,6,7,8-tetrahydrofolate + NADP(+) = (6R)-5,10-methenyltetrahydrofolate + NADPH. It carries out the reaction (6R)-5,10-methenyltetrahydrofolate + H2O = (6R)-10-formyltetrahydrofolate + H(+). It functions in the pathway one-carbon metabolism; tetrahydrofolate interconversion. Its function is as follows. Catalyzes the oxidation of 5,10-methylenetetrahydrofolate to 5,10-methenyltetrahydrofolate and then the hydrolysis of 5,10-methenyltetrahydrofolate to 10-formyltetrahydrofolate. This chain is Bifunctional protein FolD, found in Neisseria gonorrhoeae (strain ATCC 700825 / FA 1090).